The primary structure comprises 371 residues: Signal peptide peptidase-like 1 (371 aa).

The Lumenal segment spans residues methionine 1–lysine 6. Residues leucine 7 to tyrosine 27 traverse the membrane as a helical segment. Residues alanine 28–glutamine 57 lie on the Cytoplasmic side of the membrane. Residues alanine 58 to leucine 75 form a helical membrane-spanning segment. Topologically, residues phenylalanine 76 to serine 80 are lumenal. Residues histidine 81–valine 103 form a helical membrane-spanning segment. The Cytoplasmic portion of the chain corresponds to asparagine 104 to lysine 123. A helical transmembrane segment spans residues proline 124 to serine 146. At glycine 147–tryptophan 149 the chain is on the lumenal side. A helical membrane pass occupies residues leucine 150–valine 167. At arginine 168–asparagine 171 the chain is on the cytoplasmic side. Residues isoleucine 172–phenylalanine 192 form a helical membrane-spanning segment. Residue aspartate 186 is part of the active site. Over serine 193–tyrosine 258 the chain is Lumenal. Residues methionine 259–phenylalanine 279 form a helical membrane-spanning segment. The active site involves aspartate 265. The Cytoplasmic segment spans residues aspartate 280–tyrosine 301. Residues valine 302–leucine 322 traverse the membrane as a helical segment. Residues serine 323–proline 326 are Lumenal-facing. Residues glutamine 327–leucine 347 traverse the membrane as a helical segment. The short motif at proline 328–leucine 330 is the PAL element. The Cytoplasmic segment spans residues arginine 348–valine 371.

The protein belongs to the peptidase A22B family.

It is found in the endosome membrane. Functionally, intramembrane-cleaving aspartic protease (I-CLiP) that cleaves type II membrane signal peptides in the hydrophobic plane of the membrane. This Oryza sativa subsp. japonica (Rice) protein is Signal peptide peptidase-like 1 (SPPL1).